The chain runs to 441 residues: Dolichyl-diphosphooligosaccharide--protein glycosyltransferase 48 kDa subunit (441 aa).

The N-terminal stretch at 1–28 is a signal peptide; it reads MATALSGGFSKNALFILSAALMLQAVLG. The Lumenal portion of the chain corresponds to 29–410; sequence DGKTLVLLDN…TQYERFIPSA (382 aa). The helical transmembrane segment at 411-431 threads the bilayer; that stretch reads FPYYASAFSMMAGLFVFSVVF. Topologically, residues 432 to 441 are cytoplasmic; that stretch reads LHMREKEKSD.

Belongs to the DDOST 48 kDa subunit family. Component of the oligosaccharyltransferase (OST) complex.

Its subcellular location is the endoplasmic reticulum membrane. It functions in the pathway protein modification; protein glycosylation. Its function is as follows. Subunit of the oligosaccharyl transferase (OST) complex that catalyzes the initial transfer of a defined glycan (Glc(3)Man(9)GlcNAc(2) in eukaryotes) from the lipid carrier dolichol-pyrophosphate to an asparagine residue within an Asn-X-Ser/Thr consensus motif in nascent polypeptide chains, the first step in protein N-glycosylation. N-glycosylation occurs cotranslationally and the complex associates with the Sec61 complex at the channel-forming translocon complex that mediates protein translocation across the endoplasmic reticulum (ER). All subunits are required for a maximal enzyme activity. Required for the assembly of both SST3A- and SS3B-containing OST complexes. In Danio rerio (Zebrafish), this protein is Dolichyl-diphosphooligosaccharide--protein glycosyltransferase 48 kDa subunit.